Consider the following 289-residue polypeptide: tRNA-cytidine(32) 2-sulfurtransferase (289 aa).

A PP-loop motif motif is present at residues 49-54 (SGGKDS). Positions 124, 127, and 215 each coordinate [4Fe-4S] cluster.

It belongs to the TtcA family. Homodimer. Requires Mg(2+) as cofactor. [4Fe-4S] cluster is required as a cofactor.

Its subcellular location is the cytoplasm. The enzyme catalyses cytidine(32) in tRNA + S-sulfanyl-L-cysteinyl-[cysteine desulfurase] + AH2 + ATP = 2-thiocytidine(32) in tRNA + L-cysteinyl-[cysteine desulfurase] + A + AMP + diphosphate + H(+). The protein operates within tRNA modification. Its function is as follows. Catalyzes the ATP-dependent 2-thiolation of cytidine in position 32 of tRNA, to form 2-thiocytidine (s(2)C32). The sulfur atoms are provided by the cysteine/cysteine desulfurase (IscS) system. This is tRNA-cytidine(32) 2-sulfurtransferase from Methylococcus capsulatus (strain ATCC 33009 / NCIMB 11132 / Bath).